We begin with the raw amino-acid sequence, 648 residues long: Rho GTPase-activating protein 25 (648 aa).

A PH domain is found at 46 to 151; that stretch reads RPIKVGWLKK…WVKFLRRVAG (106 aa). A Rho-GAP domain is found at 160 to 354; the sequence is QRLDETVAYE…MMIRDHEVLF (195 aa). The interval 356 to 559 is disordered; that stretch reads KSKDAPISPP…DLDSLQRTVQ (204 aa). 3 positions are modified to phosphoserine: Ser-363, Ser-396, and Ser-403. The span at 393–410 shows a compositional bias: polar residues; sequence RTDSFSNTASSPDATSPT. The residue at position 407 (Thr-407) is a Phosphothreonine. Basic and acidic residues predominate over residues 417–431; sequence QHQEDSGKAPRENPG. 2 stretches are compositionally biased toward polar residues: residues 453 to 462 and 497 to 515; these read SAFQGTTSSK and DQRT…SQGN. Ser-537 is modified (phosphoserine). The stretch at 540–641 forms a coiled coil; it reads EAGSKNSGED…VKEFVKSMEK (102 aa).

GTPase activator for the Rho-type GTPases by converting them to an inactive GDP-bound state. In Mus musculus (Mouse), this protein is Rho GTPase-activating protein 25 (Arhgap25).